Consider the following 467-residue polypeptide: Transcription factor CRF1 (467 aa).

Positions 1–10 (MLLSAPVNST) are enriched in polar residues. Disordered regions lie at residues 1–42 (MLLS…VVLS), 62–110 (DFES…SSKT), 151–170 (SKSESHRQYHSPSASTTNED), and 341–361 (TYRDDESTDEDESLPTPDRKR). The span at 11–23 (VRRKPHSPNKKKP) shows a compositional bias: basic residues. Residues 28–42 (TAASFSSSSSTVVLS) show a composition bias toward low complexity. Residues 89 to 102 (YSREENTNEVEEKT) show a composition bias toward basic and acidic residues.

Interacts with FHL1 to form a repressor complex. The formation of the CRF1-FHL1 complex is inhibited by the TOR pathway. In terms of processing, phosphorylated by CDC28 and YAK1.

It localises to the cytoplasm. It is found in the nucleus. Transcription factor, corepressor with FHL1 of ribosomal protein genes. May be involved in the blocking of the spread of silencing. In Saccharomyces cerevisiae (strain ATCC 204508 / S288c) (Baker's yeast), this protein is Transcription factor CRF1 (CRF1).